Consider the following 328-residue polypeptide: MHTLIERLEKVTNSKELEEARLNALGKKGVFADKFNQLKNLNGEEKNAFAKEIHHYKQAFEKAFEWKKKAILELELEERLKKEKIDVSLFNAIKTSSSHPLNYTKNKIIEFFTPLGYKLEIGSLVEDDFHNFSALNLPPYHPARDMQDTFYFKDHKLLRTHTSPVQIHTMQEQTPPIKMICLGETFRRDYDLTHTPMFHQIEGLVVDQKGNIRFTHLKGVIEDFLHYFFGGVQLRWRSSFFPFTEPSAEVDISCVFCKQEGCRVCSHTGWLEVLGCGMVNNAVFEAIGYENVSGFAFGMGIERLAMLTCQINDLRSFFETDLRVLESF.

E245 provides a ligand contact to Mg(2+).

The protein belongs to the class-II aminoacyl-tRNA synthetase family. Phe-tRNA synthetase alpha subunit type 1 subfamily. As to quaternary structure, tetramer of two alpha and two beta subunits. Mg(2+) serves as cofactor.

The protein resides in the cytoplasm. It catalyses the reaction tRNA(Phe) + L-phenylalanine + ATP = L-phenylalanyl-tRNA(Phe) + AMP + diphosphate + H(+). In Helicobacter pylori (strain HPAG1), this protein is Phenylalanine--tRNA ligase alpha subunit.